The following is a 135-amino-acid chain: Phosphoinositide-interacting protein (135 aa).

The disordered stretch occupies residues 1–21 (MEVLPKALEVDERSPESKDLL). Positions 8–19 (LEVDERSPESKD) are enriched in basic and acidic residues. The next 2 membrane-spanning stretches (helical) occupy residues 54 to 74 (IIIM…TCVA) and 92 to 112 (PAFL…VPII).

Interacts with TRPV1. Strongly expressed in most dorsal root ganglia (DRG) and trigeminal neurons. Expressed by most peptidergic (CGRP+) and non-peptidergic (IB4+) DRG neurons. Weakly expressed in other parts of the peripheral nervous system (PNS) including sympathetic and enteric neurons. Not expressed in the spinal cord.

Its subcellular location is the membrane. In terms of biological role, regulatory subunit of TRPV1, a molecular sensor of noxious heat and capsaicin. Positively regulates TRPV1 channel activity via phosphatidylinositol 4,5-bisphosphate (PIP2). Binds various phosphoinositide, including phosphatidylinositol 4,5-bisphosphate (PIP2), but not phosphatidylinositol (PI). The sequence is that of Phosphoinositide-interacting protein (Pirt) from Mus musculus (Mouse).